Consider the following 264-residue polypeptide: Phosphoinositide-3-kinase-interacting protein 1 (264 aa).

Residues 1 to 21 (MLLAWVHTFLLSNMLLAEAYG) form the signal peptide. The Extracellular segment spans residues 22 to 170 (SGGCFWDNGH…SKEKKDLGTL (149 aa)). In terms of domain architecture, Kringle spans 24–101 (GCFWDNGHLY…EKRPCEDVSC (78 aa)). 3 disulfide bridges follow: Cys25–Cys101, Cys46–Cys82, and Cys70–Cys96. The segment at 94 to 129 (RPCEDVSCPETTSQAPPPSSAMELEEKSGAPGDKEA) is disordered. A compositionally biased stretch (basic and acidic residues) spans 117–129 (LEEKSGAPGDKEA). The helical transmembrane segment at 171–191 (GYVLGITMMVIILAIGAGIIV) threads the bilayer. At 192–264 (GYTYKRGKDL…LTGQAGTPGA (73 aa)) the chain is on the cytoplasmic side.

The protein resides in the cell membrane. Its function is as follows. Negative regulator of hepatic phosphatidylinositol 3-kinase (PI3K) activity. The chain is Phosphoinositide-3-kinase-interacting protein 1 (Pik3ip1) from Mus musculus (Mouse).